The following is a 43-amino-acid chain: Subtilosin-A (43 aa).

Residues 1-8 constitute a propeptide that is removed on maturation; the sequence is MKKAVIVE. The segment at residues 9-43 is a cross-link (cyclopeptide (Asn-Gly)); the sequence is NKGCATCSIGAACLVDGPIPDFEIAGATGLFGLWG. The segment at residues 12–39 is a cross-link (2-cysteinyl-D-phenylalanine (Cys-Phe)); the sequence is CATCSIGAACLVDGPIPDFEIAGATGLF. The segment at residues 15 to 36 is a cross-link (2-cysteinyl-D-allo-threonine (Cys-Thr)); the sequence is CSIGAACLVDGPIPDFEIAGAT. The 2-cysteinyl-L-phenylalanine (Cys-Phe) cross-link spans 21–30; it reads CLVDGPIPDF.

This sequence belongs to the bacteriocin class V family. Post-translationally, this sactipeptide undergoes unique processing steps that include proteolytic cleavage after Glu-8, and covalent linkage of the alpha-amino of Asn-9 with the carboxyl of Gly-43 to form a cyclopeptide. Thioether cross-links are formed between cysteines and the alpha-carbons of other amino acids, Cys-12 to Phe-39, Cys-15 to Thr-36, and Cys-21 to Phe-30. In forming these cross-links, Thr-36 and Phe-39 are converted to D-amino acids. Propeptide cleavage and cyclopeptide formation only occur after all 3 thioether cross-links are formed.

It localises to the secreted. Has bacteriocidal activity against some Gram-positive bacteria such as Listeria, some species of Bacillus and E.faecium. A single mutation (Thr-14-Ile) confers hemolytic activity against rabbit and human blood. This Bacillus subtilis (strain 168) protein is Subtilosin-A (sboA).